The following is a 101-amino-acid chain: Large ribosomal subunit protein bL21 (101 aa).

The protein belongs to the bacterial ribosomal protein bL21 family. Part of the 50S ribosomal subunit. Contacts protein L20.

In terms of biological role, this protein binds to 23S rRNA in the presence of protein L20. This Beutenbergia cavernae (strain ATCC BAA-8 / DSM 12333 / CCUG 43141 / JCM 11478 / NBRC 16432 / NCIMB 13614 / HKI 0122) protein is Large ribosomal subunit protein bL21.